The sequence spans 184 residues: Ribosome maturation factor RimM (184 aa).

The region spanning 101 to 180 (EGEFFYCDLV…KITTHNAKTL (80 aa)) is the PRC barrel domain.

This sequence belongs to the RimM family. In terms of assembly, binds ribosomal protein uS19.

It is found in the cytoplasm. In terms of biological role, an accessory protein needed during the final step in the assembly of 30S ribosomal subunit, possibly for assembly of the head region. Essential for efficient processing of 16S rRNA. May be needed both before and after RbfA during the maturation of 16S rRNA. It has affinity for free ribosomal 30S subunits but not for 70S ribosomes. The sequence is that of Ribosome maturation factor RimM from Helicobacter pylori (strain ATCC 700392 / 26695) (Campylobacter pylori).